Reading from the N-terminus, the 187-residue chain is Putative zinc finger protein 833 (187 aa).

C2H2-type zinc fingers lie at residues 10–32 (YKCK…ERTH), 38–60 (YECN…ARIH), 66–88 (YICK…ENTH), 94–116 (CECK…ERIH), 122–144 (YKCK…KSTH), and 150–172 (YECK…EGVH).

The chain is Putative zinc finger protein 833 (ZNF833P) from Homo sapiens (Human).